The chain runs to 765 residues: uncharacterized protein (765 aa).

Positions 1–22 (MKLKGFLAVGVSVFGFSGLLMA) are cleaved as a signal peptide. The N-palmitoyl cysteine moiety is linked to residue cysteine 23. Residue cysteine 23 is the site of S-diacylglycerol cysteine attachment. Disordered stretches follow at residues 177–203 (EGTP…LEIA) and 218–255 (TAQN…TTKS). Positions 179–192 (TPTSTTVQATVSSR) are enriched in polar residues. The span at 236 to 247 (SSSSSSTTSTTG) shows a compositional bias: low complexity.

The protein belongs to the MG185/MG260 family.

The protein localises to the cell membrane. This is an uncharacterized protein from Mycoplasma genitalium (strain ATCC 33530 / DSM 19775 / NCTC 10195 / G37) (Mycoplasmoides genitalium).